A 130-amino-acid chain; its full sequence is Glycoprotein hormone beta-5 (130 aa).

The first 24 residues, 1-24 (MKLAFLFLGPMALLLLAGYGCVLG), serve as a signal peptide directing secretion. 5 cysteine pairs are disulfide-bonded: C36-C84, C50-C99, C60-C115, C64-C117, and C120-C127. N87 is a glycosylation site (N-linked (GlcNAc...) asparagine).

It belongs to the glycoprotein hormones subunit beta family. In terms of assembly, heterodimer with GPHA2; this heterodimer interacts with thyroid-stimulating hormone receptor (TSHR), and hence stimulates cAMP production. N-glycosylated. Highly expressed in brain and at low levels in pituitary. Also found in retina, testis and skin but not in pancreas, parotid, kidney, stomach, liver, colon, small intestine, thyroid, brain or adrenal gland. In pituitary, colocalizes with ACTH, suggesting that it is located in corticotrophs.

It localises to the secreted. Functionally, functions as a heterodimeric glycoprotein hormone with GPHA2 able to bind and activate the thyroid-stimulating hormone receptor (TSHR), leading to increased cAMP production. Plays a central role in controlling thyroid cell metabolism. The sequence is that of Glycoprotein hormone beta-5 (GPHB5) from Homo sapiens (Human).